The following is a 420-amino-acid chain: Dynein axonemal assembly factor 4 (420 aa).

The CS domain occupies 3 to 87; it reads VRVSEFSWQQ…KEPVLWDSLS (85 aa). The interval 7–103 is mediates interaction with ESR1 and STUB1; it reads EFSWQQTPAT…EMMQRIREKS (97 aa). Positions 164 to 192 are enriched in basic and acidic residues; the sequence is ECQKKADGQKRVQRKEKPLEGKQAEETKA. A disordered region spans residues 164 to 212; it reads ECQKKADGQKRVQRKEKPLEGKQAEETKALKPRGLPRKAPPTRLPTRGR. TPR repeat units follow at residues 288-321, 322-355, and 364-397; these read PDWL…NCKI, PLLY…LTPP, and MKAH…DPAN.

Interacts with ZMYND10. Interacts with ESR1 and ESR2. Interacts with STUB1. Interacts with DNAAF2. Interacts with CCT3, CCT4, CCT5 and CCT8. Interacts with DNAAF6/PIH1D3.

It is found in the nucleus. Its subcellular location is the cytoplasm. The protein localises to the dynein axonemal particle. It localises to the cell projection. The protein resides in the neuron projection. Involved in neuronal migration during development of the cerebral neocortex. May regulate the stability and proteasomal degradation of the estrogen receptors that play an important role in neuronal differentiation, survival and plasticity. Axonemal dynein assembly factor required for ciliary motility. The polypeptide is Dynein axonemal assembly factor 4 (Mus musculus (Mouse)).